The chain runs to 435 residues: 3-ketoacyl-CoA thiolase (435 aa).

Cys98 functions as the Acyl-thioester intermediate in the catalytic mechanism. Residues His391 and Cys421 each act as proton acceptor in the active site.

Belongs to the thiolase-like superfamily. Thiolase family. As to quaternary structure, heterotetramer of two alpha chains (FadJ) and two beta chains (FadI).

The protein localises to the cytoplasm. The enzyme catalyses an acyl-CoA + acetyl-CoA = a 3-oxoacyl-CoA + CoA. It functions in the pathway lipid metabolism; fatty acid beta-oxidation. In terms of biological role, catalyzes the final step of fatty acid oxidation in which acetyl-CoA is released and the CoA ester of a fatty acid two carbons shorter is formed. The protein is 3-ketoacyl-CoA thiolase of Vibrio cholerae serotype O1 (strain ATCC 39315 / El Tor Inaba N16961).